Reading from the N-terminus, the 456-residue chain is Arginine biosynthesis bifunctional protein ArgJ, mitochondrial (456 aa).

The substrate site is built by Thr184, Lys213, Thr224, Glu311, Asn451, and Thr456. Thr224 (nucleophile) is an active-site residue.

This sequence belongs to the ArgJ family. In terms of assembly, heterodimer of an alpha and a beta chain. Post-translationally, the alpha and beta chains are autoproteolytically processed from a single precursor protein within the mitochondrion.

It is found in the mitochondrion matrix. The catalysed reaction is N(2)-acetyl-L-ornithine + L-glutamate = N-acetyl-L-glutamate + L-ornithine. It carries out the reaction L-glutamate + acetyl-CoA = N-acetyl-L-glutamate + CoA + H(+). The protein operates within amino-acid biosynthesis; L-arginine biosynthesis; L-ornithine and N-acetyl-L-glutamate from L-glutamate and N(2)-acetyl-L-ornithine (cyclic): step 1/1. Its pathway is amino-acid biosynthesis; L-arginine biosynthesis; N(2)-acetyl-L-ornithine from L-glutamate: step 1/4. Catalyzes two activities which are involved in the cyclic version of arginine biosynthesis: the synthesis of acetylglutamate from glutamate and acetyl-CoA, and of ornithine by transacetylation between acetylornithine and glutamate. The polypeptide is Arginine biosynthesis bifunctional protein ArgJ, mitochondrial (Aspergillus oryzae (strain ATCC 42149 / RIB 40) (Yellow koji mold)).